The sequence spans 37 residues: Large ribosomal subunit protein bL36c (37 aa).

This sequence belongs to the bacterial ribosomal protein bL36 family.

It is found in the plastid. It localises to the chloroplast. The sequence is that of Large ribosomal subunit protein bL36c from Staurastrum punctulatum (Green alga).